Reading from the N-terminus, the 156-residue chain is Zinc finger SWIM domain-containing protein 7 homolog (156 aa).

The SWIM-type zinc finger occupies 82-120; the sequence is YMCLIQGDYCSCPSFNFSVLLKSDSVYCKHQISSILAEI.

Belongs to the SWS1 family.

It is found in the nucleus. May be involved in the homologous recombination repair (HRR) pathway of double-stranded DNA breaks arising during DNA replication or induced by DNA-damaging agents. In Dictyostelium discoideum (Social amoeba), this protein is Zinc finger SWIM domain-containing protein 7 homolog (zswim7).